Reading from the N-terminus, the 619-residue chain is DNA mismatch repair protein MutL (619 aa).

A compositionally biased stretch (basic and acidic residues) spans 368 to 378; that stretch reads VDEPKQVDEPK. Residues 368-403 form a disordered region; the sequence is VDEPKQVDEPKQSSPVQEPKEEIPSFLPTVESKQND.

The protein belongs to the DNA mismatch repair MutL/HexB family.

Its function is as follows. This protein is involved in the repair of mismatches in DNA. It is required for dam-dependent methyl-directed DNA mismatch repair. May act as a 'molecular matchmaker', a protein that promotes the formation of a stable complex between two or more DNA-binding proteins in an ATP-dependent manner without itself being part of a final effector complex. This Geobacillus sp. (strain WCH70) protein is DNA mismatch repair protein MutL.